A 343-amino-acid chain; its full sequence is Dihydroorotase (343 aa).

Zn(2+)-binding residues include His13 and His15. Substrate is bound by residues 15 to 17 and Asn41; that span reads HLR. Zn(2+)-binding residues include Lys99, His136, and His174. Residue Lys99 is modified to N6-carboxylysine. Substrate is bound at residue His136. Leu219 serves as a coordination point for substrate. Asp247 is a binding site for Zn(2+). The active site involves Asp247. Substrate contacts are provided by His251 and Ala263.

The protein belongs to the metallo-dependent hydrolases superfamily. DHOase family. Class II DHOase subfamily. In terms of assembly, homodimer. Requires Zn(2+) as cofactor.

The catalysed reaction is (S)-dihydroorotate + H2O = N-carbamoyl-L-aspartate + H(+). It participates in pyrimidine metabolism; UMP biosynthesis via de novo pathway; (S)-dihydroorotate from bicarbonate: step 3/3. Catalyzes the reversible cyclization of carbamoyl aspartate to dihydroorotate. In Shewanella oneidensis (strain ATCC 700550 / JCM 31522 / CIP 106686 / LMG 19005 / NCIMB 14063 / MR-1), this protein is Dihydroorotase.